Consider the following 547-residue polypeptide: Probable acetolactate synthase (547 aa).

E57 serves as a coordination point for thiamine diphosphate. Residues P159 and 299-318 (DRVE…LYGD) contribute to the FAD site. The segment at 388 to 468 (DFGSYAGRMI…VVSVIGNNGI (81 aa)) is thiamine pyrophosphate binding. D439 and N466 together coordinate Mg(2+).

The protein belongs to the TPP enzyme family. Mg(2+) is required as a cofactor. Thiamine diphosphate serves as cofactor.

The enzyme catalyses 2 pyruvate + H(+) = (2S)-2-acetolactate + CO2. It functions in the pathway amino-acid biosynthesis; L-isoleucine biosynthesis; L-isoleucine from 2-oxobutanoate: step 1/4. Its pathway is amino-acid biosynthesis; L-valine biosynthesis; L-valine from pyruvate: step 1/4. The chain is Probable acetolactate synthase (ilvG) from Mycobacterium bovis (strain ATCC BAA-935 / AF2122/97).